The primary structure comprises 132 residues: Small ribosomal subunit protein uS8 (132 aa).

It belongs to the universal ribosomal protein uS8 family. As to quaternary structure, part of the 30S ribosomal subunit. Contacts proteins S5 and S12.

In terms of biological role, one of the primary rRNA binding proteins, it binds directly to 16S rRNA central domain where it helps coordinate assembly of the platform of the 30S subunit. The protein is Small ribosomal subunit protein uS8 of Exiguobacterium sibiricum (strain DSM 17290 / CCUG 55495 / CIP 109462 / JCM 13490 / 255-15).